Consider the following 346-residue polypeptide: NADH-quinone oxidoreductase subunit H (346 aa).

The next 9 helical transmembrane spans lie at Ile13–Phe33, Pro51–Val71, Ala83–Ile103, Val116–Gly136, Ile162–Val182, Leu191–Leu211, Phe244–Phe264, Val278–Ile298, and Leu310–Ala330.

Belongs to the complex I subunit 1 family. In terms of assembly, NDH-1 is composed of 14 different subunits. Subunits NuoA, H, J, K, L, M, N constitute the membrane sector of the complex.

Its subcellular location is the cell inner membrane. The enzyme catalyses a quinone + NADH + 5 H(+)(in) = a quinol + NAD(+) + 4 H(+)(out). In terms of biological role, NDH-1 shuttles electrons from NADH, via FMN and iron-sulfur (Fe-S) centers, to quinones in the respiratory chain. The immediate electron acceptor for the enzyme in this species is believed to be ubiquinone. Couples the redox reaction to proton translocation (for every two electrons transferred, four hydrogen ions are translocated across the cytoplasmic membrane), and thus conserves the redox energy in a proton gradient. This subunit may bind ubiquinone. The protein is NADH-quinone oxidoreductase subunit H of Jannaschia sp. (strain CCS1).